The sequence spans 103 residues: Photosystem II 5 kDa protein, chloroplastic (103 aa).

Residues 1 to 75 (MASMTMTATF…LAKVAMAEEE (75 aa)) constitute a chloroplast transit peptide.

In terms of processing, the maturation of the PSII-T precursor to its final form occurs through a two step process. First, a stromal intermediate is formed, which, upon translocation into the thylakoid membrane, is processed to the mature protein.

It is found in the plastid. Its subcellular location is the chloroplast thylakoid membrane. Its function is as follows. May be a component of the oxygen-evolving complex. This Arabidopsis thaliana (Mouse-ear cress) protein is Photosystem II 5 kDa protein, chloroplastic (PSBT).